The following is a 422-amino-acid chain: MDSILVKGNGELRGQIPIAGAKNACLALMPATLLSDEPLTLTNAPRLSDIRTMTQLLQSLGAEVASLQGGQVLALSSHALTDHRADYDIVRKMRASILVLGPMLARDGHAVVSLPGGCAIGARPVDLHLKALEAMGAELDLRDGYIHAKAPAGGLKGARVVFPLVSVGATENALMAATLAKGTTVLENAAREPEIVDLARCLRRMGAQIEGEGSSIMTIQGVDRLGGATHPVVTDRIELGTYMLAPAICGGEVELLGGRIELVGAFCEKLDAAGISVEETERGLRVARRNGRVKAVDVMTEPFPGFPTDLQAQMMALLCTAEGTSVLEERIFENRFMHAPELIRMGARIEVHGGTATVTGVEKLRGAPVMATDLRASVSLILAGLAAEGETIVSRVYHLDRGYERVEEKLSACGAQIRRIPG.

22–23 is a phosphoenolpyruvate binding site; the sequence is KN. R94 contributes to the UDP-N-acetyl-alpha-D-glucosamine binding site. Catalysis depends on C118, which acts as the Proton donor. At C118 the chain carries 2-(S-cysteinyl)pyruvic acid O-phosphothioketal. Residues 123–127, D309, and I331 each bind UDP-N-acetyl-alpha-D-glucosamine; that span reads RPVDL.

Belongs to the EPSP synthase family. MurA subfamily.

The protein resides in the cytoplasm. It catalyses the reaction phosphoenolpyruvate + UDP-N-acetyl-alpha-D-glucosamine = UDP-N-acetyl-3-O-(1-carboxyvinyl)-alpha-D-glucosamine + phosphate. The protein operates within cell wall biogenesis; peptidoglycan biosynthesis. In terms of biological role, cell wall formation. Adds enolpyruvyl to UDP-N-acetylglucosamine. This Cereibacter sphaeroides (strain ATCC 17023 / DSM 158 / JCM 6121 / CCUG 31486 / LMG 2827 / NBRC 12203 / NCIMB 8253 / ATH 2.4.1.) (Rhodobacter sphaeroides) protein is UDP-N-acetylglucosamine 1-carboxyvinyltransferase.